The chain runs to 37 residues: Large ribosomal subunit protein bL36 (37 aa).

This sequence belongs to the bacterial ribosomal protein bL36 family.

The chain is Large ribosomal subunit protein bL36 from Mycobacterium ulcerans (strain Agy99).